Reading from the N-terminus, the 349-residue chain is Decapping nuclease RAI1 (349 aa).

Glu157 is an a divalent metal cation binding site. Residue Glu205 coordinates substrate. 3 residues coordinate a divalent metal cation: Asp207, Glu222, and Leu223. Substrate-binding residues include Lys224 and Gln248.

It belongs to the DXO/Dom3Z family. Interacts with RAT1; the interaction is direct, stabilizes RAT1 protein structure and stimulates its exoribonuclease activity. The interaction also stimulates RAI1 pyrophosphohydrolase activity, probably by recruiting it to mRNA substrates. Requires a divalent metal cation as cofactor.

It localises to the nucleus. The enzyme catalyses a 5'-end NAD(+)-phospho-ribonucleoside in mRNA + H2O = a 5'-end phospho-ribonucleoside in mRNA + NAD(+) + H(+). The catalysed reaction is a 5'-end (N(7)-methyl 5'-triphosphoguanosine)-ribonucleoside-ribonucleotide in mRNA + H2O = a (N(7)-methyl 5'-triphosphoguanosine)-nucleoside + a 5'-end phospho-ribonucleoside in mRNA + H(+). It carries out the reaction a 5'-end triphospho-ribonucleoside in mRNA + H2O = a 5'-end phospho-ribonucleoside in mRNA + diphosphate + H(+). Decapping enzyme for NAD-capped RNAs: specifically hydrolyzes the nicotinamide adenine dinucleotide (NAD) cap from a subset of RNAs by removing the entire NAD moiety from the 5'-end of an NAD-capped RNA. The NAD-cap is present at the 5'-end of some RNAs and snoRNAs. In contrast to the canonical 5'-end N7 methylguanosine (m7G) cap, the NAD cap promotes mRNA decay. Also acts as a non-canonical decapping enzyme that removes the entire cap structure of m7G capped or incompletely capped RNAs. Has decapping activity toward incomplete 5'-end m7G cap mRNAs such as unmethylated 5'-end-capped RNA (cap0), while it has no activity toward 2'-O-ribose methylated m7G cap (cap1). Also possesses RNA 5'-pyrophosphohydrolase activity by hydrolyzing the 5'-end triphosphate to release pyrophosphates. Stimulates exoribonuclease activity of Rat1, allowing it to degrade RNAs with stable secondary structure more effectively. This Yarrowia lipolytica (strain CLIB 122 / E 150) (Yeast) protein is Decapping nuclease RAI1 (RAI1).